The primary structure comprises 155 residues: MNVYNKADSFSLESDSIKDVIHDYICWLSMTDETRPSIGNVFTAMETFKIDAVRYYDGNIYDLAKDINTMSFDSFIRSLQNITSKKDKLTVYGTMGLLSIVVDINKGRDVSNIKFAAGIIILMEYIFDDTDLSHLKIALYRRIQRCYPIDDDDDR.

It belongs to the orthopoxvirus OPG029 family. Interacts with host TANK, TBKBP1 and AZI2; these interactions prevent interferon production. Interacts with host STAT2.

In terms of biological role, prevents establishment of cellular antiviral state by blocking virus-induced phosphorylation and activation of interferon regulatory factors 3/IRF3 and 7/IRF7, transcription factors critical for the induction of interferons alpha and beta. This blockage is produced through the inhibition of host TBK1, by binding host TBK1 adapter proteins TBKBP1 and AZI2, thereby producing a strong inhibition of the phosphorylation and activation of IRF3 and IRF7. Also acts as an inhibitor of the cellular response to type I IFN by interacting with host STAT2. Mechanistically, exerts its inhibitory effect after host ISGF3 complex (composed of STAT1, STAT2 and IRF9) binding to the interferon stimulated response element (ISRE). In Cynomys gunnisoni (Gunnison's prairie dog), this protein is IFN signaling evasion protein OPG029 (OPG019).